Consider the following 312-residue polypeptide: Ribosomal RNA small subunit methyltransferase H (312 aa).

Residues 33–35 (AGH), Asp52, Phe79, Asp100, and Gln107 contribute to the S-adenosyl-L-methionine site.

This sequence belongs to the methyltransferase superfamily. RsmH family.

It is found in the cytoplasm. The catalysed reaction is cytidine(1402) in 16S rRNA + S-adenosyl-L-methionine = N(4)-methylcytidine(1402) in 16S rRNA + S-adenosyl-L-homocysteine + H(+). Functionally, specifically methylates the N4 position of cytidine in position 1402 (C1402) of 16S rRNA. The sequence is that of Ribosomal RNA small subunit methyltransferase H from Finegoldia magna (strain ATCC 29328 / DSM 20472 / WAL 2508) (Peptostreptococcus magnus).